We begin with the raw amino-acid sequence, 96 residues long: MTDRLDDPALDRQLADHPDWTITSARTALTRSFGFKDFSEAFGFMARVALEAQAQDHHPDWSNSYNRVDITLSTHDSGGLSAKDFALAKAIDRIVG.

The protein belongs to the pterin-4-alpha-carbinolamine dehydratase family.

The enzyme catalyses (4aS,6R)-4a-hydroxy-L-erythro-5,6,7,8-tetrahydrobiopterin = (6R)-L-erythro-6,7-dihydrobiopterin + H2O. The polypeptide is Putative pterin-4-alpha-carbinolamine dehydratase (Rhodospirillum rubrum (strain ATCC 11170 / ATH 1.1.1 / DSM 467 / LMG 4362 / NCIMB 8255 / S1)).